The chain runs to 343 residues: ATP phosphoribosyltransferase regulatory subunit (343 aa).

The segment at 324 to 343 (RANGRAKRPARPRRSPPRPR) is disordered. A compositionally biased stretch (basic residues) spans 327 to 343 (GRAKRPARPRRSPPRPR).

This sequence belongs to the class-II aminoacyl-tRNA synthetase family. HisZ subfamily. Heteromultimer composed of HisG and HisZ subunits.

It localises to the cytoplasm. It participates in amino-acid biosynthesis; L-histidine biosynthesis; L-histidine from 5-phospho-alpha-D-ribose 1-diphosphate: step 1/9. In terms of biological role, required for the first step of histidine biosynthesis. May allow the feedback regulation of ATP phosphoribosyltransferase activity by histidine. The chain is ATP phosphoribosyltransferase regulatory subunit from Anaeromyxobacter sp. (strain Fw109-5).